We begin with the raw amino-acid sequence, 591 residues long: L-fucose isomerase (591 aa).

Active-site proton acceptor residues include glutamate 338 and aspartate 362. Mn(2+)-binding residues include glutamate 338, aspartate 362, and histidine 529.

Belongs to the L-fucose isomerase family. Requires Mn(2+) as cofactor.

It is found in the cytoplasm. It catalyses the reaction L-fucose = L-fuculose. The protein operates within carbohydrate degradation; L-fucose degradation; L-lactaldehyde and glycerone phosphate from L-fucose: step 1/3. Converts the aldose L-fucose into the corresponding ketose L-fuculose. This chain is L-fucose isomerase, found in Bacteroides thetaiotaomicron (strain ATCC 29148 / DSM 2079 / JCM 5827 / CCUG 10774 / NCTC 10582 / VPI-5482 / E50).